We begin with the raw amino-acid sequence, 363 residues long: Glutamate 5-kinase (363 aa).

Lys6 contacts ATP. 3 residues coordinate substrate: Ser46, Asp133, and Asn145. Residues 165-166 (TD) and 207-213 (TGGMHTK) each bind ATP. The region spanning 271-349 (HGRLLLDGGA…REIEALLGYT (79 aa)) is the PUA domain.

Belongs to the glutamate 5-kinase family.

The protein resides in the cytoplasm. The enzyme catalyses L-glutamate + ATP = L-glutamyl 5-phosphate + ADP. Its pathway is amino-acid biosynthesis; L-proline biosynthesis; L-glutamate 5-semialdehyde from L-glutamate: step 1/2. In terms of biological role, catalyzes the transfer of a phosphate group to glutamate to form L-glutamate 5-phosphate. This is Glutamate 5-kinase from Deinococcus radiodurans (strain ATCC 13939 / DSM 20539 / JCM 16871 / CCUG 27074 / LMG 4051 / NBRC 15346 / NCIMB 9279 / VKM B-1422 / R1).